A 282-amino-acid polypeptide reads, in one-letter code: Phosphatidylserine decarboxylase proenzyme (282 aa).

Active-site charge relay system; for autoendoproteolytic cleavage activity residues include D85, H142, and S244. S244 acts as the Schiff-base intermediate with substrate; via pyruvic acid; for decarboxylase activity in catalysis. Pyruvic acid (Ser); by autocatalysis is present on S244.

This sequence belongs to the phosphatidylserine decarboxylase family. PSD-B subfamily. Prokaryotic type I sub-subfamily. Heterodimer of a large membrane-associated beta subunit and a small pyruvoyl-containing alpha subunit. The cofactor is pyruvate. Post-translationally, is synthesized initially as an inactive proenzyme. Formation of the active enzyme involves a self-maturation process in which the active site pyruvoyl group is generated from an internal serine residue via an autocatalytic post-translational modification. Two non-identical subunits are generated from the proenzyme in this reaction, and the pyruvate is formed at the N-terminus of the alpha chain, which is derived from the carboxyl end of the proenzyme. The autoendoproteolytic cleavage occurs by a canonical serine protease mechanism, in which the side chain hydroxyl group of the serine supplies its oxygen atom to form the C-terminus of the beta chain, while the remainder of the serine residue undergoes an oxidative deamination to produce ammonia and the pyruvoyl prosthetic group on the alpha chain. During this reaction, the Ser that is part of the protease active site of the proenzyme becomes the pyruvoyl prosthetic group, which constitutes an essential element of the active site of the mature decarboxylase.

It is found in the cell membrane. It carries out the reaction a 1,2-diacyl-sn-glycero-3-phospho-L-serine + H(+) = a 1,2-diacyl-sn-glycero-3-phosphoethanolamine + CO2. It participates in phospholipid metabolism; phosphatidylethanolamine biosynthesis; phosphatidylethanolamine from CDP-diacylglycerol: step 2/2. In terms of biological role, catalyzes the formation of phosphatidylethanolamine (PtdEtn) from phosphatidylserine (PtdSer). This Coxiella burnetii (strain Dugway 5J108-111) protein is Phosphatidylserine decarboxylase proenzyme.